A 469-amino-acid polypeptide reads, in one-letter code: Neuraminidase (469 aa).

At 1 to 6 (MNPNQK) the chain is on the intravirion side. A helical transmembrane segment spans residues 7–27 (IITIGSICMVIGIVSLMLQIG). The segment at 11–33 (GSICMVIGIVSLMLQIGNIISIW) is involved in apical transport and lipid raft association. Residues 28–469 (NIISIWVSHS…GAELPFTIDK (442 aa)) lie on the Virion surface side of the membrane. The segment at 36–90 (HSIQTGNQHQAEPCNQSIITYENNTWVNQTYVNISNTNFLTEKAVASVTLAGNSS) is hypervariable stalk region. N-linked (GlcNAc...) asparagine; by host glycans are attached at residues asparagine 50, asparagine 58, asparagine 63, asparagine 68, and asparagine 88. The tract at residues 91–469 (LCPISGWAVY…GAELPFTIDK (379 aa)) is head of neuraminidase. Intrachain disulfides connect cysteine 92–cysteine 417, cysteine 124–cysteine 129, cysteine 184–cysteine 231, cysteine 233–cysteine 238, cysteine 279–cysteine 292, cysteine 281–cysteine 290, cysteine 318–cysteine 335, and cysteine 421–cysteine 446. Arginine 118 lines the substrate pocket. Asparagine 146 carries N-linked (GlcNAc...) asparagine; by host glycosylation. Aspartate 151 serves as the catalytic Proton donor/acceptor. Arginine 152 serves as a coordination point for substrate. N-linked (GlcNAc...) asparagine; by host glycosylation is present at asparagine 235. 277 to 278 (EE) contacts substrate. Arginine 293 serves as a coordination point for substrate. Positions 294, 298, and 324 each coordinate Ca(2+). Arginine 368 contacts substrate. A glycan (N-linked (GlcNAc...) asparagine; by host) is linked at asparagine 386. Catalysis depends on tyrosine 402, which acts as the Nucleophile.

It belongs to the glycosyl hydrolase 34 family. Homotetramer. Requires Ca(2+) as cofactor. In terms of processing, N-glycosylated.

The protein localises to the virion membrane. It is found in the host apical cell membrane. It carries out the reaction Hydrolysis of alpha-(2-&gt;3)-, alpha-(2-&gt;6)-, alpha-(2-&gt;8)- glycosidic linkages of terminal sialic acid residues in oligosaccharides, glycoproteins, glycolipids, colominic acid and synthetic substrates.. Its activity is regulated as follows. Inhibited by the neuraminidase inhibitors zanamivir (Relenza) and oseltamivir (Tamiflu). These drugs interfere with the release of progeny virus from infected cells and are effective against all influenza strains. Resistance to neuraminidase inhibitors is quite rare. Functionally, catalyzes the removal of terminal sialic acid residues from viral and cellular glycoconjugates. Cleaves off the terminal sialic acids on the glycosylated HA during virus budding to facilitate virus release. Additionally helps virus spread through the circulation by further removing sialic acids from the cell surface. These cleavages prevent self-aggregation and ensure the efficient spread of the progeny virus from cell to cell. Otherwise, infection would be limited to one round of replication. Described as a receptor-destroying enzyme because it cleaves a terminal sialic acid from the cellular receptors. May facilitate viral invasion of the upper airways by cleaving the sialic acid moieties on the mucin of the airway epithelial cells. Likely to plays a role in the budding process through its association with lipid rafts during intracellular transport. May additionally display a raft-association independent effect on budding. Plays a role in the determination of host range restriction on replication and virulence. Sialidase activity in late endosome/lysosome traffic seems to enhance virus replication. This Aves (Cat) protein is Neuraminidase.